The chain runs to 417 residues: Delta-aminolevulinic acid dehydratase, chloroplastic (417 aa).

The N-terminal 40 residues, 1 to 40, are a transit peptide targeting the chloroplast; it reads MAALLVPGGGAAPGLVWRRRRAAVQCAAASPSSPDPSWRT. Residues 63-92 form a disordered region; sequence VVSGNPPAAPAAPAKAKAPPGTPVVKPLRL. The active-site Schiff-base intermediate with substrate is the Lys286. 5-aminolevulinate contacts are provided by Arg296 and Lys308. Glu324 provides a ligand contact to Mg(2+). The active-site Schiff-base intermediate with substrate is Lys339. 5-aminolevulinate contacts are provided by Ser365 and Tyr404.

Belongs to the ALAD family. Homooctamer. Mg(2+) is required as a cofactor.

Its subcellular location is the plastid. The protein resides in the chloroplast. It carries out the reaction 2 5-aminolevulinate = porphobilinogen + 2 H2O + H(+). Its pathway is porphyrin-containing compound metabolism; protoporphyrin-IX biosynthesis; coproporphyrinogen-III from 5-aminolevulinate: step 1/4. Functionally, catalyzes an early step in the biosynthesis of tetrapyrroles. Binds two molecules of 5-aminolevulinate per subunit, each at a distinct site, and catalyzes their condensation to form porphobilinogen. This is Delta-aminolevulinic acid dehydratase, chloroplastic (HEMB) from Selaginella martensii (Martens's spike moss).